The following is a 118-amino-acid chain: uncharacterized protein (118 aa).

Residues 1–12 (MADDNVSFTDQG) show a composition bias toward polar residues. The segment at 1-63 (MADDNVSFTD…KKGKTKKVRK (63 aa)) is disordered. A compositionally biased stretch (basic residues) spans 39–63 (TKKKGKKNKKSKKKAKKGKTKKVRK). The helical transmembrane segment at 81 to 101 (FCAGIIVAMIMLFVIIIYGII) threads the bilayer.

Its subcellular location is the membrane. This is an uncharacterized protein from Caenorhabditis elegans.